A 65-amino-acid polypeptide reads, in one-letter code: Large ribosomal subunit protein uL29 (65 aa).

It belongs to the universal ribosomal protein uL29 family.

In Lactobacillus acidophilus (strain ATCC 700396 / NCK56 / N2 / NCFM), this protein is Large ribosomal subunit protein uL29.